We begin with the raw amino-acid sequence, 307 residues long: Shikimate kinase 2, chloroplastic (307 aa).

Residues 1-60 constitute a chloroplast transit peptide; sequence MEARAGLAMQSRAAVGVGAGPGVGRRGRAVIRVGKRPTAASLRVGGPAGPAAAKPLAPLY. ATP is bound at residue 101–108; sequence GMMGSGKS. Residue Ser108 coordinates Mg(2+). The substrate site is built by Asp126, Arg151, and Gly173. An ATP-binding site is contributed by Arg212. The interval 285–307 is disordered; the sequence is HSTSSGPVGDLIVDSQNRRTKAL.

It belongs to the shikimate kinase family. It depends on Mg(2+) as a cofactor. Expressed in panicles.

The protein resides in the plastid. The protein localises to the chloroplast. It carries out the reaction shikimate + ATP = 3-phosphoshikimate + ADP + H(+). It functions in the pathway metabolic intermediate biosynthesis; chorismate biosynthesis; chorismate from D-erythrose 4-phosphate and phosphoenolpyruvate: step 5/7. Its function is as follows. Catalyzes the specific phosphorylation of the 3-hydroxyl group of shikimic acid using ATP as a cosubstrate. In Oryza sativa subsp. japonica (Rice), this protein is Shikimate kinase 2, chloroplastic (SK2).